Reading from the N-terminus, the 691-residue chain is CREB-regulated transcription coactivator 2 (691 aa).

Over residues 1–20 the composition is skewed to polar residues; that stretch reads MATSGANGPGSATASASNPR. The tract at residues 1 to 30 is disordered; it reads MATSGANGPGSATASASNPRKFSEKIALQK. Alanine 2 is subject to N-acetylalanine. Residue arginine 51 is modified to Asymmetric dimethylarginine; by PRMT6. Serine 70, serine 86, and serine 90 each carry phosphoserine. Asymmetric dimethylarginine; by PRMT6 is present on residues arginine 99, arginine 120, and arginine 123. A Phosphoserine modification is found at serine 136. Arginine 161 and arginine 168 each carry asymmetric dimethylarginine; by PRMT6. Phosphothreonine is present on threonine 169. Position 171 is a phosphoserine; by AMPK, MARK2, SIK1 and SIK2 (serine 171). Positions 174 to 186 are enriched in polar residues; that stretch reads ALHTSVMNPNPQD. The segment at 174–195 is disordered; the sequence is ALHTSVMNPNPQDTYPGPTPPS. Threonine 192 carries the phosphothreonine modification. Residue lysine 234 forms a Glycyl lysine isopeptide (Lys-Gly) (interchain with G-Cter in SUMO2) linkage. Positions 271–287 match the Nuclear export signal motif; sequence TGGSLPDLTNLHFPPPL. Phosphoserine; by MARK2 is present on serine 274. 2 disordered regions span residues 280 to 306 and 335 to 491; these read NLHF…GGNS and HSPL…YSPP. Serine 306, serine 368, serine 393, serine 433, and serine 456 each carry phosphoserine. Composition is skewed to low complexity over residues 335–383 and 390–411; these read HSPL…HALP and PSLS…SPVL. Polar residues predominate over residues 447 to 468; the sequence is SQQQLPKQFSPTMSPTLSSITQ. A Phosphotyrosine modification is found at tyrosine 488. Phosphoserine occurs at positions 489 and 492. Threonine 501 carries the phosphothreonine modification. Positions 513–543 are disordered; it reads CLVQPSGGQPPGRQPHYGTLYPPGSSGHGQQ. Serine 611, serine 621, and serine 622 each carry phosphoserine.

Belongs to the TORC family. In terms of assembly, binds, as a tetramer, through its N-terminal region, with the bZIP domain of CREB1. 'Arg-314' in the bZIP domain of CREB1 is essential for this interaction. Interaction, via its C-terminal, with TAF4, enhances recruitment of TAF4 to CREB1. Interacts with SIK2. Interacts with 14-3-3 proteins, YWHAB and YWHAG. Interacts (probably when phosphorylated at Ser-171) with YWHAE. Interacts with calmodulin-dependent catalytic subunit PPP3CA/calcineurin A. Interaction with COP1 mediates nuclear export and degradation of CRTC2. In terms of processing, phosphorylation/dephosphorylation states of Ser-171 are required for regulating transduction of CREB activity. CRTCs/TORCs are inactive when phosphorylated, and active when dephosphorylated at this site. This primary site of phosphorylation, is regulated by cAMP and calcium levels and is dependent on the phosphorylation of SIKs (SIK1 and SIK2) by LKB1. Following adenylyl cyclase activation, dephosphorylated at Ser-171 by PPP3CA/calcineurin A resulting in CRTC2 dissociation from 14-3-3 proteins and PPP3CA. Both insulin and AMPK increase this phosphorylation of CRTC2 while glucagon suppresses it. Phosphorylation at Ser-274 by MARK2 is induced under low glucose conditions and dephosphorylated in response to glucose influx. Phosphorylation at Ser-274 promotes interaction with 14-3-3 proteins and translocation to the cytoplasm. Asymmetric dimethylation of arginine resisues by PRMT6 enhances the association of CRTC2 with CREB on the promoters of gluconeogenic genes.

The protein localises to the cytoplasm. Its subcellular location is the nucleus. Its function is as follows. Transcriptional coactivator for CREB1 which activates transcription through both consensus and variant cAMP response element (CRE) sites. Acts as a coactivator, in the SIK/TORC signaling pathway, being active when dephosphorylated and acts independently of CREB1 'Ser-133' phosphorylation. Enhances the interaction of CREB1 with TAF4. Regulates gluconeogenesis as a component of the LKB1/AMPK/TORC2 signaling pathway. Regulates the expression of specific genes such as the steroidogenic gene, StAR. Potent coactivator of PPARGC1A and inducer of mitochondrial biogenesis in muscle cells. The sequence is that of CREB-regulated transcription coactivator 2 (Crtc2) from Rattus norvegicus (Rat).